Here is a 232-residue protein sequence, read N- to C-terminus: CD302 antigen (232 aa).

The signal sequence occupies residues 1 to 22; it reads MPRAAPPALLLPLLGLAAAAAA. The Extracellular segment spans residues 23-168; the sequence is DCPSSTWVQF…YEKKYLSDNR (146 aa). The C-type lectin domain maps to 32 to 152; that stretch reads FQDSCYIFLQ…CEVSSVEGTL (121 aa). N109 carries an N-linked (GlcNAc...) asparagine glycan. The cysteines at positions 128 and 143 are disulfide-linked. The chain crosses the membrane as a helical span at residues 169-189; sequence ILISALVIASTVILTVLGAVV. Topologically, residues 190 to 232 are cytoplasmic; sequence WFLYKRSLDSGFTTVFSAAHQSPYNDDCVLVVAEENEYDIQFN.

It is found in the membrane. The protein localises to the cell projection. Its subcellular location is the filopodium. The protein resides in the cytoplasm. It localises to the cell cortex. It is found in the microvillus. Functionally, potential multifunctional C-type lectin receptor that may play roles in endocytosis and phagocytosis as well as in cell adhesion and migration. This is CD302 antigen from Bos taurus (Bovine).